A 250-amino-acid chain; its full sequence is Cysteine proteinase inhibitor 12 (250 aa).

A signal peptide spans 1-32 (MRVAATTRPASSSAAAPLPLFLLLAVAAAAAA). Cystatin domains follow at residues 49–137 (GGAH…RNTG) and 156–202 (PGWR…AEVV). The short motif at 93 to 97 (QVVAG) is the Secondary area of contact element.

It belongs to the cystatin family. Phytocystatin subfamily.

Its subcellular location is the secreted. Its function is as follows. Specific inhibitor of cysteine proteinases. Probably involved in the regulation of endogenous processes and in defense against pests and pathogens. The sequence is that of Cysteine proteinase inhibitor 12 from Oryza sativa subsp. japonica (Rice).